A 417-amino-acid chain; its full sequence is MADIKNYTLNFGPQHPAAHGVLRLVLELDGEVIQRADPHIGLLHRATEKLAEQKTWIQSVPYMDRLDYVSMMVNEHAYVMAIERLLGLEVPVRAQYIRVMFDEITRLLNHLMWIGSHALDVGAMAVFLYAFREREDMFDMYEAVSGARMHAAYYRPGGVYRDLPDTMPQYRASKVHNERAIKAMNEARSGSLLDFIEDFTNRFPKYVDEYETLLTDNRIWKQRLVDIGVVSPERALQMGFTGPMLRGSGIEWDLRKKQPYEVYDKLDFDVPVGVGGDCYARYLVRVEEMRQSNRIIRQCVEWLRRNPGPVITDNHKVAPPSRVDMKSNMEELIHHFKLFTEGMHVPEGEAYAAVEHPKGEFGIYAISDGANKPYRLKIRAPGFPHLAALDEMAKGHMIADAVTIIGTQDIVFGEIDR.

Belongs to the complex I 49 kDa subunit family. In terms of assembly, NDH-1 is composed of 14 different subunits. Subunits NuoB, C, D, E, F, and G constitute the peripheral sector of the complex.

Its subcellular location is the cell inner membrane. It catalyses the reaction a quinone + NADH + 5 H(+)(in) = a quinol + NAD(+) + 4 H(+)(out). In terms of biological role, NDH-1 shuttles electrons from NADH, via FMN and iron-sulfur (Fe-S) centers, to quinones in the respiratory chain. The immediate electron acceptor for the enzyme in this species is believed to be ubiquinone. Couples the redox reaction to proton translocation (for every two electrons transferred, four hydrogen ions are translocated across the cytoplasmic membrane), and thus conserves the redox energy in a proton gradient. The polypeptide is NADH-quinone oxidoreductase subunit D (Cupriavidus necator (strain ATCC 17699 / DSM 428 / KCTC 22496 / NCIMB 10442 / H16 / Stanier 337) (Ralstonia eutropha)).